The following is a 106-amino-acid chain: Large ribosomal subunit protein uL23 (106 aa).

This sequence belongs to the universal ribosomal protein uL23 family. As to quaternary structure, part of the 50S ribosomal subunit. Contacts protein L29, and trigger factor when it is bound to the ribosome.

Its function is as follows. One of the early assembly proteins it binds 23S rRNA. One of the proteins that surrounds the polypeptide exit tunnel on the outside of the ribosome. Forms the main docking site for trigger factor binding to the ribosome. The protein is Large ribosomal subunit protein uL23 of Neisseria gonorrhoeae (strain ATCC 700825 / FA 1090).